The chain runs to 86 residues: UPF0457 protein SAUSA300_2132 (86 aa).

Belongs to the UPF0457 family.

In Staphylococcus aureus (strain USA300), this protein is UPF0457 protein SAUSA300_2132.